Here is an 84-residue protein sequence, read N- to C-terminus: Large ribosomal subunit protein bL27 (84 aa).

Belongs to the bacterial ribosomal protein bL27 family.

The protein is Large ribosomal subunit protein bL27 of Campylobacter jejuni subsp. jejuni serotype O:6 (strain 81116 / NCTC 11828).